A 397-amino-acid polypeptide reads, in one-letter code: Ethanolaminephosphotransferase 1 (397 aa).

The residue at position 2 (A2) is an N-acetylalanine. 10 consecutive transmembrane segments (helical) span residues 47–69 (WLAPNLITFSGFLLVVFNFLLMA), 84–103 (HVPDWVWIVVGILNFVAYTL), 123–145 (LFDHGLDNWSYVYFVVTVYSIFG), 150–172 (GVSVFVLYLLLWVVLFSFILSHW), 179–201 (ILFLPWGYDISQVTISFVYIVTA), 221–243 (LFTAMIIGCALCVTLPMSLLNFF), 256–278 (VYEAMVPLFSPCLLFILSTAWIL), 291–310 (VFYFMVGTAFANSTCQLIVC), 317–339 (CPTLNWLLVPLFLVVLVVNLGVA), and 344–366 (SILLYTLTTAFTLAHIHYGVRVV). A non-standard amino acid (selenocysteine) is located at residue U387.

It belongs to the CDP-alcohol phosphatidyltransferase class-I family. Mg(2+) serves as cofactor. It depends on Mn(2+) as a cofactor.

The protein localises to the endoplasmic reticulum membrane. The enzyme catalyses CDP-ethanolamine + a 1,2-diacyl-sn-glycerol = a 1,2-diacyl-sn-glycero-3-phosphoethanolamine + CMP + H(+). It catalyses the reaction 1-O-alkyl-2-acyl-sn-glycerol + CDP-ethanolamine = a 1-O-alkyl-2-acyl-sn-glycero-3-phosphoethanolamine + CMP + H(+). It functions in the pathway phospholipid metabolism; phosphatidylethanolamine biosynthesis; phosphatidylethanolamine from ethanolamine: step 3/3. Ethanolaminephosphotransferase that catalyzes the transfer of phosphoethanolamine (PE) from CDP-ethanolamine to lipid acceptors, the final step in the synthesis of PE via the 'Kennedy' pathway. PE is the second most abundant phospholipid of membranes in mammals and is involved in various membrane-related cellular processes. The enzyme is critical for the synthesis of several PE species and also catalyzes the synthesis of plasmanyl-PE, a lipid required for proper myelination and neurodevelopment, from 1-alkyl-2-acylglycerol. The sequence is that of Ethanolaminephosphotransferase 1 from Pongo abelii (Sumatran orangutan).